Here is a 513-residue protein sequence, read N- to C-terminus: Na(+)/H(+) antiporter NhaB (513 aa).

Transmembrane regions (helical) follow at residues 23 to 43, 52 to 72, 97 to 117, 120 to 140, 144 to 164, 202 to 222, 238 to 258, 303 to 323, 348 to 368, 391 to 411, 447 to 467, and 475 to 495; these read LALIIFLIVNPLIFLISPFVA, IFTLAMALKCYPLLPGGLLAI, LLLMFMVAGIYFMKQLLLFIF, LLLSIRSKMLLSLSFCVAAAF, FLDALTVVAVVISVAVGFYGI, LMMHAGVGTALGGVMTMVGEP, FFLRMSPVTVPVLICGLLTCL, AIIGVWLVTALALHLAEVGLI, TESLPFTALLTVFFSVVAVII, LFYIFNGLLSSISDNVFVGTI, ATPNGQAAFLFLLTSALAPLI, and VWMALPYTLVLTLVGLLCVEF.

This sequence belongs to the NhaB Na(+)/H(+) (TC 2.A.34) antiporter family.

The protein resides in the cell inner membrane. The catalysed reaction is 2 Na(+)(in) + 3 H(+)(out) = 2 Na(+)(out) + 3 H(+)(in). Functionally, na(+)/H(+) antiporter that extrudes sodium in exchange for external protons. The chain is Na(+)/H(+) antiporter NhaB from Shigella flexneri serotype 5b (strain 8401).